Reading from the N-terminus, the 426-residue chain is DNA polymerase processivity factor component OPG148 (426 aa).

The protein belongs to the orthopoxvirus OPG148 family. Interacts with the DNA polymerase catalytic subunit OPG071. Interacts with UDG/OPG116. Component of the uracil-DNA glycosylase(UDG)-OPG148-polymerase complex; OPG148 and UDG form a heterodimeric processivity factor that associates with OPG071 to form the processive polymerase holoenzyme. Interacts with OPG117.

Plays an essential role in viral DNA replication by acting as the polymerase processivity factor together with protein OPG116. Serves as a bridge which links the DNA polymerase OPG071 and the uracil DNA glycosylase. The chain is DNA polymerase processivity factor component OPG148 (OPG148) from Cynomys gunnisoni (Gunnison's prairie dog).